The sequence spans 362 residues: 3-dehydroquinate synthase (362 aa).

NAD(+)-binding positions include D71–K76, G105–D109, T129–T130, K142, and K151. The Zn(2+) site is built by E184, H247, and H264.

Belongs to the sugar phosphate cyclases superfamily. Dehydroquinate synthase family. Requires NAD(+) as cofactor. It depends on Co(2+) as a cofactor. Zn(2+) serves as cofactor.

It localises to the cytoplasm. The catalysed reaction is 7-phospho-2-dehydro-3-deoxy-D-arabino-heptonate = 3-dehydroquinate + phosphate. Its pathway is metabolic intermediate biosynthesis; chorismate biosynthesis; chorismate from D-erythrose 4-phosphate and phosphoenolpyruvate: step 2/7. In terms of biological role, catalyzes the conversion of 3-deoxy-D-arabino-heptulosonate 7-phosphate (DAHP) to dehydroquinate (DHQ). The protein is 3-dehydroquinate synthase of Haemophilus ducreyi (strain 35000HP / ATCC 700724).